The primary structure comprises 103 residues: Histone H4 (103 aa).

Gly residues predominate over residues 1 to 14; the sequence is MSGRGKGGKGLGKG. Positions 1-20 are disordered; the sequence is MSGRGKGGKGLGKGGAKRHR. Lysine 6 bears the N6-acetyl-N6-methyllysine; alternate mark. An N6-methyllysine; alternate mark is found at lysine 6, lysine 9, and lysine 13. Residue lysine 13 is modified to N6-acetyl-N6-methyllysine; alternate. Residues 17–21 mediate DNA binding; sequence KRHRK. At lysine 92 the chain carries N6-glutaryllysine.

It belongs to the histone H4 family. The nucleosome is a histone octamer containing two molecules each of H2A, H2B, H3 and H4 assembled in one H3-H4 heterotetramer and two H2A-H2B heterodimers. The octamer wraps approximately 147 bp of DNA. Glutarylation at Lys-92 (H4K91glu) destabilizes nucleosomes by promoting dissociation of the H2A-H2B dimers from nucleosomes.

The protein resides in the nucleus. It is found in the chromosome. In terms of biological role, core component of nucleosome. Nucleosomes wrap and compact DNA into chromatin, limiting DNA accessibility to the cellular machineries which require DNA as a template. Histones thereby play a central role in transcription regulation, DNA repair, DNA replication and chromosomal stability. DNA accessibility is regulated via a complex set of post-translational modifications of histones, also called histone code, and nucleosome remodeling. This Phanerodontia chrysosporium (White-rot fungus) protein is Histone H4 (H4.1).